The following is a 551-amino-acid chain: Protein GPR107 (551 aa).

A signal peptide spans 1–33 (MAVRVPLGCTGSFCPRLLPLLALLELLVDPSLG). Residues 34 to 262 (RVHHLALKDD…YLSAGEIPLP (229 aa)) are Extracellular-facing. The N-linked (GlcNAc...) asparagine glycan is linked to asparagine 64. Residues 127–183 (GVKVRSPPEAGKQLPEIVFSKDEKVPSRSQEPAVSSNPKDSKVQRTPDGSKAQRSTV) are disordered. The span at 153-164 (SRSQEPAVSSNP) shows a compositional bias: polar residues. A glycan (N-linked (GlcNAc...) asparagine) is linked at asparagine 209. A helical membrane pass occupies residues 263-283 (KLYVSMALLFFLSGTVWIHIL). Residues 284-292 (RKRRNDVFK) are Cytoplasmic-facing. A helical transmembrane segment spans residues 293 to 313 (IHWLMAALPFTKSLSLVFHAI). Residues 314 to 336 (DYHYISSQGFPIEGWAVVYYITH) are Extracellular-facing. The helical transmembrane segment at 337–357 (LLKGALLFITIALIGTGWAFI) threads the bilayer. At 358 to 367 (KHILSDKDKK) the chain is on the cytoplasmic side. A helical membrane pass occupies residues 368 to 388 (IFMIVIPLQVLANVAYIIIES). Residues 389–401 (TEEGTTEYGLWKD) are Extracellular-facing. A helical membrane pass occupies residues 402–422 (SLFLVDLLCCGAILFPVVWSI). Over 423-443 (RHLQEASATDGKAAINLAKLK) the chain is Cytoplasmic. A helical transmembrane segment spans residues 444–466 (LFRHYYVLIVCYIYFTRIIAFLL). Topologically, residues 467–475 (KFAVPFQWK) are extracellular. Residues 476 to 495 (WLYQLLDETATLVFFVLTGY) traverse the membrane as a helical segment. Topologically, residues 496–551 (KFRPASDNPYLQLSQEEDDLEMESVVTTSGVMENMKKVKKVSNGAVEPQGSWEGTA) are cytoplasmic.

This sequence belongs to the LU7TM family. Post-translationally, cleaved by FURIN to yield two fragments that remain associated via a disulfide bond. As to expression, widely expressed. Not detected in the duodenum, nor in the exocrine pancreas.

The protein resides in the cell membrane. It is found in the golgi apparatus. Its subcellular location is the trans-Golgi network membrane. Functionally, has been proposed to act as a receptor for neuronostatin, a peptide derived from the somatostatin/SST precursor. Involved in blood sugar regulation through the induction of glucagon in response to low glucose. The protein is Protein GPR107 (Gpr107) of Rattus norvegicus (Rat).